A 475-amino-acid chain; its full sequence is MEQNLTTERSETSSSRAGTASRTDKKVFVKTYGCQMNVYDSQRMADALAAEGYRATDVIEDADLVLLNTCHIREKAAEKVYSELGRIRVLKEERAKQGRETVVGVAGCVAQAEGREILRRAPAVDLVIGPQTYHRLPSVVTRARAGEKIVETEYAVEDKFDHLPAPERTAVRSRGVTAFLTVQEGCDKFCTFCVVPYTRGAEVSRPVAQIVAEAERLAEAGVRELTLLGQNVNAWHGEGPDGREWGLGRLLFRLAEIPGLDRLRYTTSHPRDMDEELIAAHRDLIKLMPYLHLPVQAGSDRILKAMNRKHTAADYLRLIERIRAARPDIAMSGDFIVGFPGETDRDFEDTMRIVRDVNYAQAFSFKYSPRPGTPGADMHDQVPDAVKDERLQRLQALLAEQQRAFGESLVGTEIDLLLEKPGRQAGQLVGRSPWLQPVIVEENAGQIGDIVRVRITSSGGHSLFCEPAGTARVAL.

The interval Met-1–Ala-20 is disordered. The region spanning Lys-25 to Ala-145 is the MTTase N-terminal domain. Cys-34, Cys-70, Cys-108, Cys-186, Cys-190, and Cys-193 together coordinate [4Fe-4S] cluster. Positions Arg-172–Ala-404 constitute a Radical SAM core domain. The region spanning Glu-407 to Gly-469 is the TRAM domain.

Belongs to the methylthiotransferase family. MiaB subfamily. As to quaternary structure, monomer. [4Fe-4S] cluster serves as cofactor.

It is found in the cytoplasm. It carries out the reaction N(6)-dimethylallyladenosine(37) in tRNA + (sulfur carrier)-SH + AH2 + 2 S-adenosyl-L-methionine = 2-methylsulfanyl-N(6)-dimethylallyladenosine(37) in tRNA + (sulfur carrier)-H + 5'-deoxyadenosine + L-methionine + A + S-adenosyl-L-homocysteine + 2 H(+). In terms of biological role, catalyzes the methylthiolation of N6-(dimethylallyl)adenosine (i(6)A), leading to the formation of 2-methylthio-N6-(dimethylallyl)adenosine (ms(2)i(6)A) at position 37 in tRNAs that read codons beginning with uridine. The protein is tRNA-2-methylthio-N(6)-dimethylallyladenosine synthase of Chelativorans sp. (strain BNC1).